A 234-amino-acid chain; its full sequence is Sugar fermentation stimulation protein A (234 aa).

The segment at residues 201 to 220 is a DNA-binding region (H-T-H motif); that stretch reads LLSEAQQRGVEILAYKAELS.

This sequence belongs to the SfsA family.

In terms of biological role, binds to DNA non-specifically. Could be a regulatory factor involved in maltose metabolism. The chain is Sugar fermentation stimulation protein A from Escherichia coli O127:H6 (strain E2348/69 / EPEC).